The following is a 553-amino-acid chain: Retrotransposon Gag-like protein 3 (553 aa).

Positions 2-43 (VEDLAASYVTLKLENEILQAQVKRLMEENAALQAQIPELQKS) form a coiled coil. Disordered regions lie at residues 38 to 274 (PELQ…PLDP) and 474 to 514 (SGGV…EAER). Residues 45 to 57 (AVKEHEPLRKPSE) show a composition bias toward basic and acidic residues. Positions 58–73 (AQEPPESPEFPAARES) are enriched in low complexity. A compositionally biased stretch (basic and acidic residues) spans 87 to 113 (EPTKIREPREPSAISELREPPEIKEPQ). A compositionally biased stretch (polar residues) spans 118 to 127 (TNESGESSAI). The segment covering 132–147 (GSPEIKEPHLPPKSKE) has biased composition (basic and acidic residues). Positions 239–250 (QTVPEYQETSSQ) are enriched in polar residues. Positions 474 to 483 (SGGVDSSSSS) are enriched in low complexity. Residues 495–507 (TENQPVQATSNRP) show a composition bias toward polar residues. A CCHC-type zinc finger spans residues 523–537 (CLYCGHPGHFARDCP).

Expressed in embryonic myogenic progenitor cells, not expressed in adult and aged satellite cells.

It localises to the nucleus. May function as a transcriptional regulator. Plays a role in postnatal myogenesis, may be involved in the regulation of satellite cells self-renewal. This is Retrotransposon Gag-like protein 3 from Mus musculus (Mouse).